The chain runs to 357 residues: Heat-inducible transcription repressor HrcA (357 aa).

The protein belongs to the HrcA family.

Its function is as follows. Negative regulator of class I heat shock genes (grpE-dnaK-dnaJ and groELS operons). Prevents heat-shock induction of these operons. The chain is Heat-inducible transcription repressor HrcA from Chlorobium phaeovibrioides (strain DSM 265 / 1930) (Prosthecochloris vibrioformis (strain DSM 265)).